The following is a 187-amino-acid chain: Large ribosomal subunit protein uL5 (187 aa).

Belongs to the universal ribosomal protein uL5 family. Part of the 50S ribosomal subunit; part of the 5S rRNA/L5/L18/L25 subcomplex. Contacts the 5S rRNA and the P site tRNA. Forms a bridge to the 30S subunit in the 70S ribosome.

Its function is as follows. This is one of the proteins that bind and probably mediate the attachment of the 5S RNA into the large ribosomal subunit, where it forms part of the central protuberance. In the 70S ribosome it contacts protein S13 of the 30S subunit (bridge B1b), connecting the 2 subunits; this bridge is implicated in subunit movement. Contacts the P site tRNA; the 5S rRNA and some of its associated proteins might help stabilize positioning of ribosome-bound tRNAs. This is Large ribosomal subunit protein uL5 from Mycolicibacterium paratuberculosis (strain ATCC BAA-968 / K-10) (Mycobacterium paratuberculosis).